A 521-amino-acid polypeptide reads, in one-letter code: MAP kinase-activated protein kinase mak-1 (521 aa).

The span at 1–12 (MMFEYEEDEDPM) shows a compositional bias: acidic residues. The tract at residues 1 to 36 (MMFEYEEDEDPMEQQKHEEFKHHSTDHSGSPQENPF) is disordered. The segment covering 13 to 26 (EQQKHEEFKHHSTD) has biased composition (basic and acidic residues). Residues 144 to 405 (TISAEIIGIG…IHELMATPLV (262 aa)) enclose the Protein kinase domain. ATP contacts are provided by residues 150–158 (IGIGESGKV) and K173. D266 serves as the catalytic Proton acceptor.

It belongs to the protein kinase superfamily. CAMK Ser/Thr protein kinase family. May interact (via protein kinase domain) with unc-22 (via protein kinase and CRD domains). It depends on Mg(2+) as a cofactor. Post-translationally, autophosphorylated in vitro. As to expression, expressed in body wall muscles (at protein level). Expressed in intestine.

It is found in the cytoplasm. It localises to the myofibril. The protein resides in the sarcomere. The protein localises to the a band. It catalyses the reaction L-seryl-[protein] + ATP = O-phospho-L-seryl-[protein] + ADP + H(+). The catalysed reaction is L-threonyl-[protein] + ATP = O-phospho-L-threonyl-[protein] + ADP + H(+). Functionally, serine/threonine-protein kinase which may play a role in body wall muscle contraction. May phosphorylate unc-22/twitchin. This chain is MAP kinase-activated protein kinase mak-1, found in Caenorhabditis elegans.